Here is a 252-residue protein sequence, read N- to C-terminus: 2-succinyl-6-hydroxy-2,4-cyclohexadiene-1-carboxylate synthase (252 aa).

This sequence belongs to the AB hydrolase superfamily. MenH family. As to quaternary structure, monomer.

It carries out the reaction 5-enolpyruvoyl-6-hydroxy-2-succinyl-cyclohex-3-ene-1-carboxylate = (1R,6R)-6-hydroxy-2-succinyl-cyclohexa-2,4-diene-1-carboxylate + pyruvate. Its pathway is quinol/quinone metabolism; 1,4-dihydroxy-2-naphthoate biosynthesis; 1,4-dihydroxy-2-naphthoate from chorismate: step 3/7. It functions in the pathway quinol/quinone metabolism; menaquinone biosynthesis. Catalyzes a proton abstraction reaction that results in 2,5-elimination of pyruvate from 2-succinyl-5-enolpyruvyl-6-hydroxy-3-cyclohexene-1-carboxylate (SEPHCHC) and the formation of 2-succinyl-6-hydroxy-2,4-cyclohexadiene-1-carboxylate (SHCHC). The protein is 2-succinyl-6-hydroxy-2,4-cyclohexadiene-1-carboxylate synthase of Escherichia coli (strain SMS-3-5 / SECEC).